Reading from the N-terminus, the 506-residue chain is Chaperone SurA (506 aa).

An N-terminal signal peptide occupies residues 1–29 (MMRRLHSSRRFSGSLLALALGLALPLAHA). PpiC domains follow at residues 219-320 (PVML…KVLQ) and 351-450 (VTQT…QVLE).

Its subcellular location is the periplasm. The catalysed reaction is [protein]-peptidylproline (omega=180) = [protein]-peptidylproline (omega=0). Functionally, chaperone involved in the correct folding and assembly of outer membrane proteins. Recognizes specific patterns of aromatic residues and the orientation of their side chains, which are found more frequently in integral outer membrane proteins. May act in both early periplasmic and late outer membrane-associated steps of protein maturation. The polypeptide is Chaperone SurA (Bordetella avium (strain 197N)).